The primary structure comprises 715 residues: D-ribulokinase YDR109C (715 aa).

The interval Met-1 to Ile-27 is disordered.

Belongs to the FGGY kinase family.

It catalyses the reaction D-ribulose + ATP = D-ribulose 5-phosphate + ADP + H(+). It functions in the pathway carbohydrate metabolism; pentose and glucuronate interconversion. Its function is as follows. Catalyzes ATP-dependent phosphorylation of D-ribulose at C-5 to form D-ribulose 5-phosphate. Postulated to function in a metabolite repair mechanism by preventing toxic accumulation of free D-ribulose formed by non-specific phosphatase activities. Alternatively, may play a role in regulating D-ribulose 5-phosphate recycling in the pentose phosphate pathway. This Saccharomyces cerevisiae (strain ATCC 204508 / S288c) (Baker's yeast) protein is D-ribulokinase YDR109C.